A 186-amino-acid chain; its full sequence is Ribonuclease M5 (186 aa).

A Toprim domain is found at 4-94 (KEIIVVEGRD…AKPKNKRGIG (91 aa)). Mg(2+)-binding residues include Glu10, Asp56, and Asp58.

It belongs to the ribonuclease M5 family. As to quaternary structure, requires ribosomal protein L18 (rplR) for catalysis; it can be replaced by 30% dimethylsulfoxide suggesting L18 functions as an rRNA folding chaperone. Mg(2+) serves as cofactor. Requires Mn(2+) as cofactor. The cofactor is Ca(2+).

Its subcellular location is the cytoplasm. The enzyme catalyses Endonucleolytic cleavage of RNA, removing 21 and 42 nucleotides, respectively, from the 5'- and 3'-termini of a 5S-rRNA precursor.. Required for correct processing of both the 5' and 3' ends of 5S rRNA precursor. Cleaves both sides of a double-stranded region yielding mature 5S rRNA in one step. Releases 5'-phosphoryl and 3'-hydroxy termini. The protein is Ribonuclease M5 of Bacillus subtilis (strain 168).